A 186-amino-acid polypeptide reads, in one-letter code: Transcription factor pgmR (186 aa).

Positions 19–46 (CDECGAAKLKCDRGHPSCGRCISLGLKC) form a DNA-binding region, zn(2)-C6 fungal-type. The disordered stretch occupies residues 52–98 (RKAGKPRRDAQSATRPPPTPGDSGPPLDYNSFGPTSPPSSVGDGATL).

It localises to the nucleus. Its function is as follows. Transcription factor that specifically regulates the expression of the pgm gene cluster that mediates the biosynthesis of cryptic naphthoquinones derived pigments responsible for the coloration of the fruiting bodies. The sequence is that of Transcription factor pgmR from Aspergillus terreus (strain NIH 2624 / FGSC A1156).